We begin with the raw amino-acid sequence, 658 residues long: Pentatricopeptide repeat-containing protein At1g69290 (658 aa).

Disordered stretches follow at residues 1 to 23 (MFRK…ESPS) and 39 to 61 (TLSP…KSSF). Positions 50 to 61 (PKTLTPDQKSSF) are enriched in polar residues. 11 PPR repeats span residues 214–249 (DLVA…GVKP), 250–284 (DELS…GFAS), 285–320 (RRIL…GEES), 323–353 (SVET…AQKL), 361–395 (DSSV…GGGS), 397–431 (GIGV…GLQL), 432–466 (DVEI…RVVD), 467–497 (LKGS…VVED), 503–537 (NSHD…RYEP), 538–568 (NNQT…IKGK), and 581–615 (DHAL…KIFV).

This sequence belongs to the PPR family. P subfamily.

The protein is Pentatricopeptide repeat-containing protein At1g69290 of Arabidopsis thaliana (Mouse-ear cress).